A 273-amino-acid chain; its full sequence is Putative pyruvate, phosphate dikinase regulatory protein (273 aa).

Residue glycine 149–threonine 156 participates in ADP binding.

It belongs to the pyruvate, phosphate/water dikinase regulatory protein family. PDRP subfamily.

The enzyme catalyses N(tele)-phospho-L-histidyl/L-threonyl-[pyruvate, phosphate dikinase] + ADP = N(tele)-phospho-L-histidyl/O-phospho-L-threonyl-[pyruvate, phosphate dikinase] + AMP + H(+). It catalyses the reaction N(tele)-phospho-L-histidyl/O-phospho-L-threonyl-[pyruvate, phosphate dikinase] + phosphate + H(+) = N(tele)-phospho-L-histidyl/L-threonyl-[pyruvate, phosphate dikinase] + diphosphate. Bifunctional serine/threonine kinase and phosphorylase involved in the regulation of the pyruvate, phosphate dikinase (PPDK) by catalyzing its phosphorylation/dephosphorylation. This chain is Putative pyruvate, phosphate dikinase regulatory protein, found in Rickettsia typhi (strain ATCC VR-144 / Wilmington).